Here is a 72-residue protein sequence, read N- to C-terminus: Crustacean hyperglycemic hormone B (72 aa).

Pyrrolidone carboxylic acid is present on glutamine 1. Phenylalanine 3 bears the D-phenylalanine; in form CHHB-II mark. Cystine bridges form between cysteine 7/cysteine 43, cysteine 23/cysteine 39, and cysteine 26/cysteine 52. At valine 72 the chain carries Valine amide.

In terms of processing, stereoinversion of L-Phe (in CHHB-I) to D-Phe (in CHHB-II).

It is found in the secreted. Hormone found in the sinus gland of isopods and decapods which controls the blood sugar level. Has a secretagogue action over the amylase released from the midgut gland. May act as a stress hormone and may be involved in the control of molting and reproduction. In Cherax destructor (Common yabby crayfish), this protein is Crustacean hyperglycemic hormone B.